A 349-amino-acid chain; its full sequence is MSILFNAYPLARPALFAMDAETAHEVTLASLQRAYDCGTTRRWLHDQPQLPTTLMGMTLRNPVGLAAGLDKNGAFIDALGNLGFGFVEVGTVTPRAQSGNPKPRMFRLPKANALINRLGFNNQGLDAFLANVTRSRFRSQGGILGLNIGKNADTPIERAADDYLIGLAGVYPHADYVTVNISSPNTKNLRALQGGDELSQLLAALRDKRAELAQQHARQVPLVVKIAPDLSQEQIDIIADTLLSNGVDGVIATNTTLSREAVQGMPHAAETGGLSGAPVHELSLAVIERLRQRVGSALAIIGVGGILSGQQAREKIAAGADAVQLYTGLIYRGPALVGECVGTLKNTAR.

FMN-binding positions include 67-71 (AGLDK) and threonine 91. Lysine 71 is a binding site for substrate. Residue 116 to 120 (NRLGF) participates in substrate binding. 2 residues coordinate FMN: asparagine 147 and asparagine 180. Residue asparagine 180 participates in substrate binding. The active-site Nucleophile is serine 183. Asparagine 185 is a binding site for substrate. Residues lysine 225 and threonine 253 each contribute to the FMN site. 254–255 (NT) contributes to the substrate binding site. Residues glycine 276, glycine 305, and 326–327 (YT) contribute to the FMN site.

This sequence belongs to the dihydroorotate dehydrogenase family. Type 2 subfamily. As to quaternary structure, monomer. FMN serves as cofactor.

It localises to the cell membrane. It catalyses the reaction (S)-dihydroorotate + a quinone = orotate + a quinol. Its pathway is pyrimidine metabolism; UMP biosynthesis via de novo pathway; orotate from (S)-dihydroorotate (quinone route): step 1/1. Its function is as follows. Catalyzes the conversion of dihydroorotate to orotate with quinone as electron acceptor. The sequence is that of Dihydroorotate dehydrogenase (quinone) from Bordetella avium (strain 197N).